We begin with the raw amino-acid sequence, 501 residues long: Aldehyde dehydrogenase 1A1 (501 aa).

Residue Ser-2 is modified to N-acetylserine. N6-acetyllysine is present on residues Lys-91 and Lys-128. NAD(+) is bound by residues 167 to 170 (IPWN), 193 to 196 (KPAE), 226 to 227 (GP), and 246 to 247 (GS). Residue Lys-252 is modified to N6-acetyllysine. Glu-269 (proton acceptor) is an active-site residue. 269 to 271 (ELG) contacts NAD(+). The Nucleophile role is filled by Cys-303. The mediates interaction with PRMT3 stretch occupies residues 336-501 (LTPGVSQGPQ…VTIKISQKNS (166 aa)). Position 337 is a phosphothreonine (Thr-337). 349–353 (EQYEK) serves as a coordination point for NAD(+). Residues Lys-353 and Lys-367 each carry the N6-acetyllysine modification. 400–402 (EIF) serves as a coordination point for NAD(+). An N6-acetyllysine modification is found at Lys-410. Ser-413 carries the phosphoserine modification. An N6-acetyllysine mark is found at Lys-419 and Lys-495.

Belongs to the aldehyde dehydrogenase family. Homotetramer. Interacts with PRMT3; the interaction is direct, inhibits ALDH1A1 aldehyde dehydrogenase activity and is independent of the methyltransferase activity of PRMT3. Post-translationally, the N-terminus is blocked most probably by acetylation.

Its subcellular location is the cytoplasm. The protein localises to the cytosol. It localises to the cell projection. It is found in the axon. It catalyses the reaction an aldehyde + NAD(+) + H2O = a carboxylate + NADH + 2 H(+). The enzyme catalyses all-trans-retinal + NAD(+) + H2O = all-trans-retinoate + NADH + 2 H(+). The catalysed reaction is 9-cis-retinal + NAD(+) + H2O = 9-cis-retinoate + NADH + 2 H(+). It carries out the reaction 11-cis-retinal + NAD(+) + H2O = 11-cis-retinoate + NADH + 2 H(+). It catalyses the reaction 13-cis-retinal + NAD(+) + H2O = 13-cis-retinoate + NADH + 2 H(+). The enzyme catalyses 3-deoxyglucosone + NAD(+) + H2O = 2-dehydro-3-deoxy-D-gluconate + NADH + 2 H(+). The catalysed reaction is (E)-4-hydroxynon-2-enal + NAD(+) + H2O = (E)-4-hydroxynon-2-enoate + NADH + 2 H(+). It carries out the reaction malonaldehyde + NAD(+) + H2O = 3-oxopropanoate + NADH + 2 H(+). It catalyses the reaction hexanal + NAD(+) + H2O = hexanoate + NADH + 2 H(+). The enzyme catalyses propanal + NAD(+) + H2O = propanoate + NADH + 2 H(+). The catalysed reaction is acetaldehyde + NAD(+) + H2O = acetate + NADH + 2 H(+). It carries out the reaction benzaldehyde + NAD(+) + H2O = benzoate + NADH + 2 H(+). It catalyses the reaction 4-aminobutanal + NAD(+) + H2O = 4-aminobutanoate + NADH + 2 H(+). It participates in cofactor metabolism; retinol metabolism. With respect to regulation, inhibited by duocarmycin analogs. In terms of biological role, cytosolic dehydrogenase that catalyzes the irreversible oxidation of a wide range of aldehydes to their corresponding carboxylic acid. Functions downstream of retinol dehydrogenases and catalyzes the oxidation of retinaldehyde into retinoic acid, the second step in the oxidation of retinol/vitamin A into retinoic acid. This pathway is crucial to control the levels of retinol and retinoic acid, two important molecules which excess can be teratogenic and cytotoxic. Also oxidizes aldehydes resulting from lipid peroxidation like (E)-4-hydroxynon-2-enal/HNE, malonaldehyde and hexanal that form protein adducts and are highly cytotoxic. By participating for instance to the clearance of (E)-4-hydroxynon-2-enal/HNE in the lens epithelium prevents the formation of HNE-protein adducts and lens opacification. Also functions downstream of fructosamine-3-kinase in the fructosamine degradation pathway by catalyzing the oxidation of 3-deoxyglucosone, the carbohydrate product of fructosamine 3-phosphate decomposition, which is itself a potent glycating agent that may react with lysine and arginine side-chains of proteins. Also has an aminobutyraldehyde dehydrogenase activity and is probably part of an alternative pathway for the biosynthesis of GABA/4-aminobutanoate in midbrain, thereby playing a role in GABAergic synaptic transmission. The sequence is that of Aldehyde dehydrogenase 1A1 from Ovis aries (Sheep).